Here is a 311-residue protein sequence, read N- to C-terminus: Solute carrier family 25 member 48 (311 aa).

3 Solcar repeats span residues 3–86 (SFQL…TQRF), 101–205 (RTLS…LSEW), and 214–301 (PSPC…SLQA). Transmembrane regions (helical) follow at residues 9-29 (FAAG…LDTV), 61-81 (GMSF…GVFS), 107-127 (LLAS…VDLI), 189-209 (VPGY…ITPE), 217-237 (CAVW…ATPM), and 277-295 (ITVN…FLGY).

The protein belongs to the mitochondrial carrier (TC 2.A.29) family.

The protein localises to the mitochondrion inner membrane. In Homo sapiens (Human), this protein is Solute carrier family 25 member 48 (SLC25A48).